The following is a 141-amino-acid chain: Large ribosomal subunit protein uL16 (141 aa).

Positions 1–21 (MLMPKRVKYRKQQRGHNRGMA) are disordered.

It belongs to the universal ribosomal protein uL16 family. In terms of assembly, part of the 50S ribosomal subunit.

Functionally, binds 23S rRNA and is also seen to make contacts with the A and possibly P site tRNAs. The sequence is that of Large ribosomal subunit protein uL16 from Roseiflexus sp. (strain RS-1).